The sequence spans 467 residues: Involucrin (467 aa).

The tract at residues Glu48–Lys467 is disordered. Over residues Ile49 to His75 the composition is skewed to basic and acidic residues. 2 stretches are compositionally biased toward low complexity: residues Gln76–Leu95 and Gln105–Glu177. 2 stretches are compositionally biased toward basic and acidic residues: residues Leu178 to Leu192 and Arg220 to Leu231. Residues Gln278–Leu290 are compositionally biased toward low complexity. Basic and acidic residues-rich tracts occupy residues Gln295–Leu318, Leu348–Asp373, Glu380–Leu391, Lys415–Ser437, and Lys450–Lys467.

This sequence belongs to the involucrin family. As to quaternary structure, directly or indirectly cross-linked to cornifelin (CNFN). Post-translationally, substrate of transglutaminase. Specific glutamines or lysines are cross-linked to keratins, desmoplakin and to inter involucrin molecules. In terms of tissue distribution, keratinocytes of epidermis and other stratified squamous epithelia.

It localises to the cytoplasm. Its function is as follows. Part of the insoluble cornified cell envelope (CE) of stratified squamous epithelia. This chain is Involucrin (Ivl), found in Mus musculus (Mouse).